Consider the following 188-residue polypeptide: Threonylcarbamoyl-AMP synthase (188 aa).

The 186-residue stretch at 3-188 (QLHPSEIKDL…RSGKILRNGQ (186 aa)) folds into the YrdC-like domain.

Belongs to the SUA5 family. TsaC subfamily.

It localises to the cytoplasm. The enzyme catalyses L-threonine + hydrogencarbonate + ATP = L-threonylcarbamoyladenylate + diphosphate + H2O. Its function is as follows. Required for the formation of a threonylcarbamoyl group on adenosine at position 37 (t(6)A37) in tRNAs that read codons beginning with adenine. Catalyzes the conversion of L-threonine, HCO(3)(-)/CO(2) and ATP to give threonylcarbamoyl-AMP (TC-AMP) as the acyladenylate intermediate, with the release of diphosphate. The protein is Threonylcarbamoyl-AMP synthase of Shewanella sp. (strain ANA-3).